The chain runs to 294 residues: uncharacterized protein (294 aa).

The tract at residues 181-204 (DEPFPTTKNHNNDKRETNDKDDQQ) is disordered. Positions 190-204 (HNNDKRETNDKDDQQ) are enriched in basic and acidic residues.

The protein belongs to the IIV-6 391R family.

This is an uncharacterized protein from Acheta domesticus (House cricket).